The sequence spans 127 residues: Protein ApaG (127 aa).

Residues 3–127 enclose the ApaG domain; the sequence is DTNKYRIEVQ…FVLASPRALH (125 aa).

In Dechloromonas aromatica (strain RCB), this protein is Protein ApaG.